An 880-amino-acid polypeptide reads, in one-letter code: MPKPTISYSLNGLPAAAVDSIGSLLEILARIRGIVLTEQSNDETASIIISAPDVHRLVVGSDDSHYDSTTLYIEDFLNRLCEALDAVGKKAEAGAFRHALQLYHTDRELGALKHGESVTNRQLKNDSFEDLEFLVEAWLVALNSEESARKLPAPLPVKSPDTRAMTLAEKILAHHAFSLPSSGGLKSGELGMKHGMVSIGELPSVWRNDRFWLAGDHTVEPRTYDQPRVRELLNGLNDAKQEFKMTENQGSNYTILHTEFVRERAEPGMLALGSDSHTCSAGAVSCLAIGLGAADVMTALATGETWIKVPESIRIDFTGEPAWYIRGKDVILYILKELKRNTFAADRIVEFGGLGARFLSCDARFAITNMCTELGGVTGIFVPDEVTNTFVSGRPQSKYKSNSIYFQPDKDASYAATFQIDLTMVESFIALHPSPDNVVPVSEKLDMSFEGCFIGACTTTEEELVLGALVLEAGLKNGLGLAPGKRMVVPGSIPIVNSLRELGLLEIYAQTGFEQPAVGCSLCLGMGADRAGEGENWISSQNRNFKNRMGKGSTGHICSAATVAASSFSMRLTNPAALLAQVSPDRYKALLESCQSYKNRVRKVKSSKKESVKRSVSVMPSYVEPYLHFRSPLTEKHTQMHAPSGGEGEQCGNLDIIESKIYALGDFVDTDAVSRDLFLHLSDVSGETMTSGVLTMLEIIPAAFILESPTDTLLGSHALEFTNPDFRDKVRQGMRVVVAGKAFGCGSSREEAPRALKGLGVQCVIAKSFSFIYGRNQPSIGLLGINIADDRFYELAKTGAGIKIDVPGRVVRLEGQNFPFVLDDMELSLIKNNGLATAYKKYGKNVFALLCNTKSSLRPSELAELQLKGVSDGMQTSLEW.

[4Fe-4S] cluster is bound by residues C457, C520, and C523.

It belongs to the aconitase/IPM isomerase family. LeuC type 2 subfamily. It depends on [4Fe-4S] cluster as a cofactor.

The enzyme catalyses (2R,3S)-3-isopropylmalate = (2S)-2-isopropylmalate. Its pathway is mycotoxin biosynthesis. Functionally, 3-isopropylmalate dehydratase large subunit; part of the gene cluster that mediates the biosynthesis of pneumocandins, lipohexapeptides of the echinocandin family that prevent fungal cell wall formation by non-competitive inhibition of beta-1,3-glucan synthase. The 10,12-dimethylmyristoyl side chain is synthesized by the reducing polyketide synthase gloL/GLPKS4. The thioesterase gloN/GLHYD exclusively interacts with gloL/GLPKS4 to maintain turnover of the polyketide side chain. The 10R,12S-dimethylmyristic acid is then transferred to the first thiolation domain of the nonribosomal peptide synthetase gloA/GLNRPS4 by the acyl-AMP ligase gloD/GLligase, followed by its acylation to L-ornithine to trigger elongation of the cyclic hexapeptide. L-ornithine, 4R-hydroxyl-L-proline (generated from L-proline by the dioxygenase gloF/GLOXY2), 3S-hydroxyl-L-homotyrosine (generated by gloG/GLHtyB, gloH/GLHtyA, gloI/GLHtyC, gloJ/GLHtyD and hydroxylated at C-3 by the dioxygenase gloM/GLOXY1), 3R-hydroxyl-L-glutamine (generated from L-glutamine probably by the dioxygenase gloE/GLOXY3) and 3S-hydroxyl-L-proline (generated from L-proline by the dioxygenase gloF/GLOXY2 to yield pneumocandin B0), or 3S-hydroxyl-4S-methyl-L-proline (generated from L-leucine by the dioxygenase gloC/GLOXY4 to yield pneumocandin A0) are sequentially added to the growing chain. The last C domain of gloA/GLNRPS4 is proposed to be responsible for cyclization by condensation to form the peptide bond between L-ornithine and 3S-hydroxyl-4S-methyl-L-proline (for pneumocandin A0) or 3S-hydroxyl-L-proline (for pneumocandin B0). Finally, the subsequent C-4 hydroxylation of 3S-hydroxyl-L-homotyrosine and L-ornithine dihydroxylation at C-4 and C-5 are performed by the cytochrome P450 monooxygenases gloP/GLP450-1 and gloO/GLP450-2, respectively. The sequence is that of 3-isopropylmalate dehydratase large subunit gloJ from Glarea lozoyensis (strain ATCC 20868 / MF5171).